The chain runs to 184 residues: RNA 2',3'-cyclic phosphodiesterase (184 aa).

The active-site Proton donor is the H42. Short sequence motifs (HXTX) lie at residues 42–45 (HFTL) and 127–130 (HLTV). H127 functions as the Proton acceptor in the catalytic mechanism.

Belongs to the 2H phosphoesterase superfamily. ThpR family.

The catalysed reaction is a 3'-end 2',3'-cyclophospho-ribonucleotide-RNA + H2O = a 3'-end 2'-phospho-ribonucleotide-RNA + H(+). In terms of biological role, hydrolyzes RNA 2',3'-cyclic phosphodiester to an RNA 2'-phosphomonoester. This is RNA 2',3'-cyclic phosphodiesterase from Methanothermobacter thermautotrophicus (strain ATCC 29096 / DSM 1053 / JCM 10044 / NBRC 100330 / Delta H) (Methanobacterium thermoautotrophicum).